We begin with the raw amino-acid sequence, 408 residues long: Solute carrier family 35 member F1 (408 aa).

The interval 1-21 (MIPPEQPQQQLQPPSPAPPNH) is disordered. The next 10 membrane-spanning stretches (helical) occupy residues 60 to 80 (MLISVALGQVLSLLICGIGLT), 94 to 114 (VFQSFLNYILLFLVYTTTLAV), 129 to 147 (WWKYMILGLIDLEANYLVV), 158 to 178 (IQLLDCFVIPVVILLSWFFLL), 186 to 206 (FIGIVVCILGMGCMVGADVLV), 221 to 241 (LLVLGGATLYGISNVWEEYII), 247 to 267 (VEFLGMIGLFGAFFSGIQLAI), 284 to 304 (LLYVGFSACMFGLYSFMPVVI), 311 to 331 (SVNLSLLTADLYSLFCGLFLF), and 335 to 355 (FSGLYLLSFFTILIGLVLYSS).

This sequence belongs to the SLC35F solute transporter family.

It localises to the cytoplasmic vesicle. Its subcellular location is the secretory vesicle. It is found in the synaptic vesicle membrane. In terms of biological role, putative solute transporter. The chain is Solute carrier family 35 member F1 (SLC35F1) from Homo sapiens (Human).